A 148-amino-acid chain; its full sequence is Deoxyuridine 5'-triphosphate nucleotidohydrolase (148 aa).

Residues 67-69, asparagine 80, 84-86, and methionine 94 each bind substrate; these read RSG and LID.

It belongs to the dUTPase family. The cofactor is Mg(2+).

The enzyme catalyses dUTP + H2O = dUMP + diphosphate + H(+). The protein operates within pyrimidine metabolism; dUMP biosynthesis; dUMP from dCTP (dUTP route): step 2/2. Its function is as follows. This enzyme is involved in nucleotide metabolism: it produces dUMP, the immediate precursor of thymidine nucleotides and it decreases the intracellular concentration of dUTP so that uracil cannot be incorporated into DNA. The sequence is that of Deoxyuridine 5'-triphosphate nucleotidohydrolase from Burkholderia ambifaria (strain MC40-6).